The primary structure comprises 378 residues: Succinyl-diaminopimelate desuccinylase (378 aa).

His66 lines the Zn(2+) pocket. The active site involves Asp68. Asp99 is a Zn(2+) binding site. Residue Glu133 is the Proton acceptor of the active site. Residues Glu134, Glu162, and His348 each contribute to the Zn(2+) site.

This sequence belongs to the peptidase M20A family. DapE subfamily. In terms of assembly, homodimer. The cofactor is Zn(2+). Co(2+) serves as cofactor.

It catalyses the reaction N-succinyl-(2S,6S)-2,6-diaminopimelate + H2O = (2S,6S)-2,6-diaminopimelate + succinate. The protein operates within amino-acid biosynthesis; L-lysine biosynthesis via DAP pathway; LL-2,6-diaminopimelate from (S)-tetrahydrodipicolinate (succinylase route): step 3/3. In terms of biological role, catalyzes the hydrolysis of N-succinyl-L,L-diaminopimelic acid (SDAP), forming succinate and LL-2,6-diaminopimelate (DAP), an intermediate involved in the bacterial biosynthesis of lysine and meso-diaminopimelic acid, an essential component of bacterial cell walls. The protein is Succinyl-diaminopimelate desuccinylase of Halorhodospira halophila (strain DSM 244 / SL1) (Ectothiorhodospira halophila (strain DSM 244 / SL1)).